Reading from the N-terminus, the 656-residue chain is Receptor-type tyrosine-protein phosphatase R (656 aa).

An N-terminal signal peptide occupies residues 1–23 (MRRAVGFPALCLLLNLHAAGCFS). Ser-23 carries an O-linked (Xyl...) (chondroitin sulfate) serine glycan. Residues 25–225 (NNDHFLAIRQ…HEADKIWSKE (201 aa)) lie on the Extracellular side of the membrane. The N-linked (GlcNAc...) asparagine glycan is linked to Asn-128. The chain crosses the membrane as a helical span at residues 226–248 (GFYAVVIFLSIFIIIVTCLMIIY). At 249-656 (RLKERLQLSF…ESRLSPETVQ (408 aa)) the chain is on the cytoplasmic side. The residue at position 271 (Ser-271) is a Phosphoserine. Position 338 is a phosphoserine; by PKA (Ser-338). One can recognise a Tyrosine-protein phosphatase domain in the interval 392–646 (LQSEFMEIPM…EFVHHALCLF (255 aa)). Substrate-binding positions include Asp-553, 587–593 (CSAGIGR), and Gln-631. Cys-587 functions as the Phosphocysteine intermediate in the catalytic mechanism.

This sequence belongs to the protein-tyrosine phosphatase family. Receptor class 7 subfamily. In terms of assembly, interacts with MAPKs. As to expression, widely expressed in the brain, most abundant in cerebellum, midbrain, cerebral cortex and hippocampus. Also expressed in heart and skeletal muscle.

The protein resides in the cytoplasm. The protein localises to the cell membrane. It carries out the reaction O-phospho-L-tyrosyl-[protein] + H2O = L-tyrosyl-[protein] + phosphate. Its function is as follows. Sequesters mitogen-activated protein kinases (MAPKs) such as MAPK1, MAPK3 and MAPK14 in the cytoplasm in an inactive form. The MAPKs bind to a dephosphorylated kinase interacting motif, phosphorylation of which by the protein kinase A complex releases the MAPKs for activation and translocation into the nucleus. This Rattus norvegicus (Rat) protein is Receptor-type tyrosine-protein phosphatase R (Ptprr).